The primary structure comprises 134 residues: UPF0756 membrane protein YeaL (134 aa).

4 helical membrane-spanning segments follow: residues alanine 14–valine 34, leucine 51–leucine 71, leucine 86–methionine 106, and proline 110–valine 130.

It belongs to the UPF0756 family.

Its subcellular location is the cell membrane. This Salmonella typhimurium (strain LT2 / SGSC1412 / ATCC 700720) protein is UPF0756 membrane protein YeaL.